The chain runs to 31 residues: MLTITSYFGFLLAVLIITSSLFIGLSKIQLI.

Residues 4–24 traverse the membrane as a helical segment; it reads ITSYFGFLLAVLIITSSLFIG.

It belongs to the PetL family. In terms of assembly, the 4 large subunits of the cytochrome b6-f complex are cytochrome b6, subunit IV (17 kDa polypeptide, PetD), cytochrome f and the Rieske protein, while the 4 small subunits are PetG, PetL, PetM and PetN. The complex functions as a dimer.

Its subcellular location is the plastid. It localises to the chloroplast thylakoid membrane. In terms of biological role, component of the cytochrome b6-f complex, which mediates electron transfer between photosystem II (PSII) and photosystem I (PSI), cyclic electron flow around PSI, and state transitions. PetL is important for photoautotrophic growth as well as for electron transfer efficiency and stability of the cytochrome b6-f complex. The polypeptide is Cytochrome b6-f complex subunit 6 (Phaseolus vulgaris (Kidney bean)).